The chain runs to 70 residues: Disintegrin triflavin (70 aa).

The Disintegrin domain occupies Gly1–Leu70. Cystine bridges form between Cys4–Cys19, Cys6–Cys14, Cys13–Cys36, Cys27–Cys33, Cys32–Cys57, and Cys45–Cys64. Residues Arg49 to Asp51 carry the Cell attachment site motif.

The protein belongs to the venom metalloproteinase (M12B) family. P-II subfamily. P-IIa sub-subfamily. Monomer. In terms of tissue distribution, expressed by the venom gland.

Its subcellular location is the secreted. Inhibits fibrinogen interaction with platelets. Acts by binding to alpha-IIb/beta-3 (ITGA2B/ITGB3) on the platelet surface and inhibits aggregation induced by ADP, thrombin, platelet-activating factor and collagen. The sequence is that of Disintegrin triflavin from Protobothrops flavoviridis (Habu).